The primary structure comprises 545 residues: MLPINNNFSLPQNSFYNTISGTYADYFSAWDKWEKQALPGEERDEAVSRLKECLINNSDELRLDRLNLSSLPDNLPAQITLLNVSYNQLTNLPELPVTLKKLYSASNKLSELPVLPPALESLQVQHNELENLPALPDSLLTMNISYNEIVSLPSLPQALKNLRATRNFLTELPAFSEGNNPVVREYFFDRNQISHIPESILNLRNECSIHISDNPLSSHALQALQRLTSSPDYHGPRIYFSMSDGQQNTLHRPLADAVTAWFPENKQSDVSQIWHAFEHEEHANTFSAFLDRLSDTVSARNTSGFREQVAAWLEKLSASAELRQQSFAVAADATESCEDRVALTWNNLRKTLLVHQASEGLFDNDTGALLSLGREMFRLEILEDIARDKVRTLHFVDEIEVYLAFQTMLAEKLQLSTAVKEMRFYGVSGVTANDLRTAEAMVRSREENEFTDWFSLWGPWHAVLKRTEADRWAQAEEQKYEMLENEYPQRVADRLKASGLSGDADAEREAGAQVMRETEQQIYRQLTDEVLALRLSENGSQLHHS.

Residues 1–242 are interaction with target proteins; the sequence is MLPINNNFSL…YHGPRIYFSM (242 aa). 8 LRR repeats span residues 57 to 77, 78 to 99, 100 to 117, 118 to 139, 140 to 157, 158 to 179, 182 to 203, and 205 to 228; these read NSDELRLDRLNLSSLPDNLPA, QITLLNVSYNQLTNLPELPVTL, KKLYSASNKLSELPVLPP, ALESLQVQHNELENLPALPDSL, LTMNISYNEIVSLPSLPQ, ALKNLRATRNFLTELPAFSEGN, VVREYFFDRNQISHIPESILNL, and NECSIHISDNPLSSHALQALQRLT. The linker stretch occupies residues 243–250; the sequence is SDGQQNTL. Residues 251-545 are E3 ubiquitin-protein ligase catalytic domain; that stretch reads HRPLADAVTA…SENGSQLHHS (295 aa). Residues 253–545 form the NEL domain; sequence PLADAVTAWF…SENGSQLHHS (293 aa). C337 (glycyl thioester intermediate) is an active-site residue.

This sequence belongs to the LRR-containing bacterial E3 ligase family. In terms of assembly, also interacts with human and mouse U2AF1 (U2AF35). In terms of processing, ubiquitinated in the presence of host E1 ubiquitin-activating enzyme, E2 ubiquitin-conjugating enzyme and ubiquitin.

It is found in the secreted. The protein resides in the host cytoplasm. Its subcellular location is the host nucleus. It catalyses the reaction S-ubiquitinyl-[E2 ubiquitin-conjugating enzyme]-L-cysteine + [acceptor protein]-L-lysine = [E2 ubiquitin-conjugating enzyme]-L-cysteine + N(6)-ubiquitinyl-[acceptor protein]-L-lysine.. Its activity is regulated as follows. Exists in an autoinhibited state in the absence of substrate protein, due to interactions of the leucine-rich repeats with NEL domain. Is activated upon binding to a substrate protein. Functionally, effector E3 ubiquitin ligase that interferes with host's ubiquitination pathway and modulates the acute inflammatory responses, thus facilitating bacterial colonization within the host cell. Interacts with IKBKG (NEMO) and TNIP1 (ABIN-1), a ubiquitin-binding adapter protein, which results in TNIP1-dependent 'Lys-27'-linked polyubiquitination of IKBKG. Consequently, polyubiquitinated IKBKG undergoes proteasome-dependent degradation, which perturbs NF-kappa-B activation during bacterial infection. Mediates polyubiquitination of host U2AF1, leading to its proteasomal degradation. Catalyzes 'Lys-48'-linked polyubiquitination and subsequent degradation of a subset of host guanylate-binding proteins (GBP1, GBP2, GBP4 and GBP6), thereby suppressing host cell defense. In contrast, host GBP3 and GBP7 are not ubiquitinated by IpaH9.8. Uses UBE2D2 (UBCH5B) as an E2 ubiquitin-conjugating enzyme. The protein is E3 ubiquitin-protein ligase ipaH9.8 (ipaH9.8) of Shigella flexneri serotype X (strain 2002017).